Consider the following 1730-residue polypeptide: Meiosis regulator and mRNA stability factor 1 (1730 aa).

At Ser65 the chain carries Phosphoserine. Residues 352–489 (IGVFWDIENC…ALLHHANQLI (138 aa)) enclose the NYN domain. Over residues 655 to 668 (MESKSGNRNSDHQQ) the composition is skewed to basic and acidic residues. Positions 655-722 (MESKSGNRNS…VNSPVEKKKR (68 aa)) are disordered. At Tyr698 the chain carries Phosphotyrosine. One can recognise an RRM domain in the interval 781–860 (VDIQVSNVDY…KKILVSLSTG (80 aa)). HTH OST-type domains follow at residues 865–939 (SLSL…SPLG) and 993–1069 (SLKV…HNKP). Phosphoserine is present on residues Ser1081 and Ser1083. HTH OST-type domains follow at residues 1089 to 1163 (QLIQ…LTHR), 1165 to 1241 (QVKR…RKRE), 1249 to 1324 (RTKQ…TEVE), 1325 to 1400 (RFKA…INRK), 1401 to 1475 (SLRS…VKLT), and 1476 to 1550 (SLYL…LKND). The disordered stretch occupies residues 1667-1714 (VQKGNLSCDSSPSSPAASPAPPGPSSEAPRPLFSKDAVESPAKKQPKN). Ser1684 carries the phosphoserine modification.

In terms of assembly, interacts with LIMK2. As to expression, predominantly present in oocytes and barely detectable in granulosa cells (at protein level).

It localises to the peroxisome. Essential regulator of oogenesis required for female meiotic progression to repress transposable elements and preventing their mobilization, which is essential for the germline integrity. Probably acts via some RNA metabolic process, equivalent to the piRNA system in males, which mediates the repression of transposable elements during meiosis by forming complexes composed of RNAs and governs the methylation and subsequent repression of transposons. Also required to protect from DNA double-strand breaks. The protein is Meiosis regulator and mRNA stability factor 1 (Marf1) of Mus musculus (Mouse).